The following is a 302-amino-acid chain: Nucleotide-binding protein SERP0433 (302 aa).

18-25 (GMSGAGKS) provides a ligand contact to ATP. Residue 69-72 (DLRG) coordinates GTP.

Belongs to the RapZ-like family.

Functionally, displays ATPase and GTPase activities. This chain is Nucleotide-binding protein SERP0433, found in Staphylococcus epidermidis (strain ATCC 35984 / DSM 28319 / BCRC 17069 / CCUG 31568 / BM 3577 / RP62A).